Reading from the N-terminus, the 256-residue chain is LexA repressor (256 aa).

Residues 1–31 (MTSQGRGTRRGGTRGNVRAFPEGPTDAGLTP) are disordered. Positions 53-73 (VREIGEAVGLTSTSSVAHQLK) form a DNA-binding region, H-T-H motif. Catalysis depends on for autocatalytic cleavage activity residues Ser-180 and Lys-217.

Belongs to the peptidase S24 family. Homodimer.

It catalyses the reaction Hydrolysis of Ala-|-Gly bond in repressor LexA.. Functionally, represses a number of genes involved in the response to DNA damage (SOS response), including recA and lexA. In the presence of single-stranded DNA, RecA interacts with LexA causing an autocatalytic cleavage which disrupts the DNA-binding part of LexA, leading to derepression of the SOS regulon and eventually DNA repair. This Frankia casuarinae (strain DSM 45818 / CECT 9043 / HFP020203 / CcI3) protein is LexA repressor.